Here is a 317-residue protein sequence, read N- to C-terminus: Protoheme IX farnesyltransferase (317 aa).

Transmembrane regions (helical) follow at residues 39 to 58 (VMSLVVFTGLIGMLVAPGSL), 62 to 84 (LGAIAILCIAVATGASGAINMWY), 100 to 120 (IPAGRIEPGEALGYGIVLAVG), 123 to 143 (LVMWLATNVVAAAVLAFAIFF), 160 to 180 (IVIGGAAGAFPPVIGWAAVTG), 184 to 204 (LMPVMMFAIVFFWTPPHFWSL), 233 to 253 (IMAYTVLLSVIAVLPWALGDT), 256 to 276 (VYGLSAVVLSLGFLVQSWRVL), and 293 to 313 (ARAAFKYSLIYLAVLFLALAV).

This sequence belongs to the UbiA prenyltransferase family. Protoheme IX farnesyltransferase subfamily.

It localises to the cell inner membrane. It carries out the reaction heme b + (2E,6E)-farnesyl diphosphate + H2O = Fe(II)-heme o + diphosphate. It participates in porphyrin-containing compound metabolism; heme O biosynthesis; heme O from protoheme: step 1/1. In terms of biological role, converts heme B (protoheme IX) to heme O by substitution of the vinyl group on carbon 2 of heme B porphyrin ring with a hydroxyethyl farnesyl side group. The protein is Protoheme IX farnesyltransferase of Granulibacter bethesdensis (strain ATCC BAA-1260 / CGDNIH1).